The primary structure comprises 256 residues: 5'-nucleotidase SurE (256 aa).

The a divalent metal cation site is built by Asp-8, Asp-9, Ser-42, and Asn-94.

It belongs to the SurE nucleotidase family. It depends on a divalent metal cation as a cofactor.

It localises to the cytoplasm. It catalyses the reaction a ribonucleoside 5'-phosphate + H2O = a ribonucleoside + phosphate. In terms of biological role, nucleotidase that shows phosphatase activity on nucleoside 5'-monophosphates. The chain is 5'-nucleotidase SurE from Ehrlichia chaffeensis (strain ATCC CRL-10679 / Arkansas).